A 363-amino-acid polypeptide reads, in one-letter code: D-alanine--D-alanine ligase (363 aa).

One can recognise an ATP-grasp domain in the interval 148–353 (KKLLAAEGLP…YGTLVSTLIE (206 aa)). 176 to 231 (RERLGLPVFVKPARAGSSIGITKVDDWAALDTAIAAAREHDPKVIVEAGIVGREVE) contacts ATP. 3 residues coordinate Mg(2+): Asp308, Glu320, and Asn322.

It belongs to the D-alanine--D-alanine ligase family. The cofactor is Mg(2+). Requires Mn(2+) as cofactor.

It is found in the cytoplasm. The catalysed reaction is 2 D-alanine + ATP = D-alanyl-D-alanine + ADP + phosphate + H(+). Its pathway is cell wall biogenesis; peptidoglycan biosynthesis. Cell wall formation. This Nocardia farcinica (strain IFM 10152) protein is D-alanine--D-alanine ligase.